The sequence spans 256 residues: tRNA (guanine-N(7)-)-methyltransferase (256 aa).

Polar residues predominate over residues 1 to 11 (MHPQDASTEQT). The tract at residues 1-35 (MHPQDASTEQTPVDDDQVESSQPVHAPEDVAHPRR) is disordered. S-adenosyl-L-methionine is bound by residues Glu85, Glu110, Asp137, and Asp160. Asp160 is an active-site residue. A substrate-binding site is contributed by Lys164. The segment at 166–171 (RHNKRR) is interaction with RNA. Substrate contacts are provided by residues Asp196 and 234–237 (TKFE).

This sequence belongs to the class I-like SAM-binding methyltransferase superfamily. TrmB family.

It catalyses the reaction guanosine(46) in tRNA + S-adenosyl-L-methionine = N(7)-methylguanosine(46) in tRNA + S-adenosyl-L-homocysteine. It functions in the pathway tRNA modification; N(7)-methylguanine-tRNA biosynthesis. Its function is as follows. Catalyzes the formation of N(7)-methylguanine at position 46 (m7G46) in tRNA. This is tRNA (guanine-N(7)-)-methyltransferase from Cupriavidus pinatubonensis (strain JMP 134 / LMG 1197) (Cupriavidus necator (strain JMP 134)).